The sequence spans 691 residues: Elongation factor G (691 aa).

One can recognise a tr-type G domain in the interval 8–282; that stretch reads NKTRNIGIMA…AVVEFLPAPV (275 aa). GTP contacts are provided by residues 17–24, 81–85, and 135–138; these read AHIDAGKT, DTPGH, and NKMD.

Belongs to the TRAFAC class translation factor GTPase superfamily. Classic translation factor GTPase family. EF-G/EF-2 subfamily.

It localises to the cytoplasm. Its function is as follows. Catalyzes the GTP-dependent ribosomal translocation step during translation elongation. During this step, the ribosome changes from the pre-translocational (PRE) to the post-translocational (POST) state as the newly formed A-site-bound peptidyl-tRNA and P-site-bound deacylated tRNA move to the P and E sites, respectively. Catalyzes the coordinated movement of the two tRNA molecules, the mRNA and conformational changes in the ribosome. The protein is Elongation factor G of Heliobacterium modesticaldum (strain ATCC 51547 / Ice1).